Reading from the N-terminus, the 184-residue chain is Der GTPase-activating protein YihI (184 aa).

The interval 1–107 (MNRPVKGAAD…VVAAKPTMSP (107 aa)) is disordered. Basic and acidic residues predominate over residues 21 to 32 (TREELEREARER). Residues 80–95 (SAVAKPKPKSKPSAPV) are compositionally biased toward low complexity.

It belongs to the YihI family. Interacts with Der.

Functionally, a GTPase-activating protein (GAP) that modifies Der/EngA GTPase function. May play a role in ribosome biogenesis. The sequence is that of Der GTPase-activating protein YihI from Pectobacterium carotovorum subsp. carotovorum (strain PC1).